Here is a 415-residue protein sequence, read N- to C-terminus: Mechanosensing system component YbdG (415 aa).

Residues 1–24 (MQDLISQVEDLAGIEIDHTTSMVM) lie on the Periplasmic side of the membrane. A helical transmembrane segment spans residues 25-45 (IFGIIFLTAVVVHIILHWVVL). Residues 46 to 67 (RTFEKRAIASSRLWLQIITQNK) are Cytoplasmic-facing. Residues 68-88 (LFHRLAFTLQGIIVNIQAVFW) form a helical membrane-spanning segment. The Periplasmic segment spans residues 89-104 (LQKGTEAADILTTCAQ). The helical transmembrane segment at 105 to 125 (LWIMMYALLSVFSLLDVILNL) threads the bilayer. Topologically, residues 126–148 (AQKFPAASQLPLKGIFQGIKLIG) are cytoplasmic. A helical transmembrane segment spans residues 149–169 (AILVGILMISLLIGQSPAILI). The Periplasmic segment spans residues 170 to 173 (SGLG). Residues 174-194 (AMAAVLMLVFKDPILGLVAGI) traverse the membrane as a helical segment. Over 195 to 415 (QLSANDMLKL…IRSLAGAFKQ (221 aa)) the chain is Cytoplasmic.

Belongs to the MscS (TC 1.A.23) family. As to quaternary structure, homoheptamer.

Its subcellular location is the cell inner membrane. In terms of biological role, functions as a component of a mechanosensing system that transmits signals triggered by external osmotic changes to intracellular factors. This Shigella flexneri protein is Mechanosensing system component YbdG (ybdG).